An 851-amino-acid chain; its full sequence is M-phase phosphoprotein 8 (851 aa).

The disordered stretch occupies residues 21–54 (NIGRSPEVEGGGAAGEEKDAATKGTVAVGDSEED). Ser-51, Ser-85, and Ser-136 each carry phosphoserine. The region spanning 59–118 (FEVERILDMKCEGGKNLYKVRWKGYTSDDDTWEPEVHLEDCKEVLLEFRKKVAENKAKAV) is the Chromo domain. A histone H3K9me3 binding region spans residues 80–87 (WKGYTSDD). The segment at 133–174 (EADSDIDQQGDTKEDTSPRKKKKKIKYKEDKSPDDLRKKRAK) is disordered. Thr-144 is subject to Phosphothreonine. Phosphoserine; by CDK1 is present on residues Ser-149 and Ser-164. Over residues 159 to 169 (YKEDKSPDDLR) the composition is skewed to basic and acidic residues. Ser-188, Ser-263, Ser-267, and Ser-274 each carry phosphoserine. A disordered region spans residues 240–302 (REDVKDNRKT…KTGQDTVQES (63 aa)). A compositionally biased stretch (acidic residues) spans 269-278 (TLEDESEDFL). Residues 279 to 295 (SDNKEKQNVRTAKDKTG) are compositionally biased toward basic and acidic residues. Residue Ser-313 is modified to Phosphoserine. Positions 315–428 (EEAGTRVRRK…DKEEKARKEP (114 aa)) are disordered. Positions 329–364 (RKFEEPKEIKKLENTNNFLERKMIPKKQRNQDKGRS) are enriched in basic and acidic residues. A Phosphothreonine; by CDK1 modification is found at Thr-379. Ser-386 and Ser-394 each carry phosphoserine. Positions 401 to 428 (EKERKNEPKEKYQKRYDFDKEEKARKEP) are enriched in basic and acidic residues. Position 447 is a phosphothreonine (Thr-447). 4 ANK repeats span residues 591-620 (TGMT…KVNG), 624-653 (NGTT…FVNV), 657-686 (NGET…DCNI), and 690-719 (HQNS…TLSR).

Homodimer. Interacts (via chromo domain) with histone H3K9me3. Has the highest affinity for H3K9me3, and lesser affinity for H3K9me2 and H3K9me1. Component of the HUSH complex; at least composed of TASOR, PPHLN1 and MPHOSPH8. Interacts with DNMT3, EHMT1 and SETDB1. Interacts with MORC2; the interaction associateS MORC2 with the HUSH complex which recruits MORC2 to heterochromatic loci. Interacts with ZNF638; leading to recruitment of the HUSH complex to unintegrated retroviral DNA. Interacts with TASOR. In terms of processing, phosphorylated in M (mitotic) phase. Phosphorylation by CDK1 promotes dissociation from chromatin.

The protein resides in the nucleus. It localises to the chromosome. Functionally, heterochromatin component that specifically recognizes and binds methylated 'Lys-9' of histone H3 (H3K9me) and promotes recruitment of proteins that mediate epigenetic repression. Mediates recruitment of the HUSH complex to H3K9me3 sites: the HUSH complex is recruited to genomic loci rich in H3K9me3 and is required to maintain transcriptional silencing by promoting recruitment of SETDB1, a histone methyltransferase that mediates further deposition of H3K9me3, as well as MORC2. Binds H3K9me and promotes DNA methylation by recruiting DNMT3A to target CpG sites; these can be situated within the coding region of the gene. Mediates down-regulation of CDH1 expression. Also represses L1 retrotransposons in collaboration with MORC2 and, probably, SETDB1, the silencing is dependent of repressive epigenetic modifications, such as H3K9me3 mark. Silencing events often occur within introns of transcriptionally active genes, and lead to the down-regulation of host gene expression. The HUSH complex is also involved in the silencing of unintegrated retroviral DNA by being recruited by ZNF638: some part of the retroviral DNA formed immediately after infection remains unintegrated in the host genome and is transcriptionally repressed. In Rattus norvegicus (Rat), this protein is M-phase phosphoprotein 8.